We begin with the raw amino-acid sequence, 239 residues long: MNAASAIALLIVFSLVIGYLMGSVMFADVFGKILNKDVRKLGSKNPGATNSIRVFGLKIGFLVGLCDALKGFLAFVFSFLIFSFWLQQYLNVNQYQKVYYLTYLSCFAATIGHIFPLYFKFKGGKAIATTGGSLLAISLWWFVICLVLWLLVTLITKYVSLASLVTFFILAIIILVPWLDYLYFFKPNPINAISYQNDWYIILFFVLWYWPLTIAVFWLHRKNIHRLLNKTENKVTQLN.

Helical transmembrane passes span Ala-6–Phe-26, Phe-61–Ile-81, Tyr-99–Phe-119, Leu-135–Ile-155, Val-159–Leu-179, and Trp-199–Leu-219.

This sequence belongs to the PlsY family. Probably interacts with PlsX.

It is found in the cell membrane. The enzyme catalyses an acyl phosphate + sn-glycerol 3-phosphate = a 1-acyl-sn-glycero-3-phosphate + phosphate. Its pathway is lipid metabolism; phospholipid metabolism. In terms of biological role, catalyzes the transfer of an acyl group from acyl-phosphate (acyl-PO(4)) to glycerol-3-phosphate (G3P) to form lysophosphatidic acid (LPA). This enzyme utilizes acyl-phosphate as fatty acyl donor, but not acyl-CoA or acyl-ACP. The chain is Glycerol-3-phosphate acyltransferase from Mycoplasma pneumoniae (strain ATCC 29342 / M129 / Subtype 1) (Mycoplasmoides pneumoniae).